The following is a 153-amino-acid chain: Superoxide dismutase [Cu-Zn] (153 aa).

Residues H45, H47, and H62 each coordinate Cu cation. Residues C56 and C145 are joined by a disulfide bond. 4 residues coordinate Zn(2+): H62, H70, H79, and D82. A Cu cation-binding site is contributed by H119.

It belongs to the Cu-Zn superoxide dismutase family. In terms of assembly, homodimer. The cofactor is Cu cation. Requires Zn(2+) as cofactor.

Its subcellular location is the cytoplasm. The enzyme catalyses 2 superoxide + 2 H(+) = H2O2 + O2. Its function is as follows. Destroys radicals which are normally produced within the cells and which are toxic to biological systems. The polypeptide is Superoxide dismutase [Cu-Zn] (SOD) (Schistosoma mansoni (Blood fluke)).